We begin with the raw amino-acid sequence, 288 residues long: 33 kDa chaperonin (288 aa).

Disulfide bonds link C236–C238 and C269–C272.

Belongs to the HSP33 family. Post-translationally, under oxidizing conditions two disulfide bonds are formed involving the reactive cysteines. Under reducing conditions zinc is bound to the reactive cysteines and the protein is inactive.

The protein localises to the cytoplasm. Functionally, redox regulated molecular chaperone. Protects both thermally unfolding and oxidatively damaged proteins from irreversible aggregation. Plays an important role in the bacterial defense system toward oxidative stress. The protein is 33 kDa chaperonin of Syntrophotalea carbinolica (strain DSM 2380 / NBRC 103641 / GraBd1) (Pelobacter carbinolicus).